Consider the following 493-residue polypeptide: Probable phospho-2-dehydro-3-deoxyheptonate aldolase, chloroplastic (493 aa).

Residues 1 to 58 (MAMSNTSALASKLLPSCKPHQPTLTFFSPSTTCQKKPRSSRPISAAVHVTQPPKTPIS) constitute a chloroplast transit peptide.

It belongs to the class-II DAHP synthase family.

It localises to the plastid. The protein resides in the chloroplast. It carries out the reaction D-erythrose 4-phosphate + phosphoenolpyruvate + H2O = 7-phospho-2-dehydro-3-deoxy-D-arabino-heptonate + phosphate. Its pathway is metabolic intermediate biosynthesis; chorismate biosynthesis; chorismate from D-erythrose 4-phosphate and phosphoenolpyruvate: step 1/7. The protein is Probable phospho-2-dehydro-3-deoxyheptonate aldolase, chloroplastic (DHS1) of Catharanthus roseus (Madagascar periwinkle).